Consider the following 79-residue polypeptide: NADH-ubiquinone oxidoreductase chain 5 (79 aa).

2 helical membrane-spanning segments follow: residues Thr5 to Tyr27 and Val40 to Ser57.

The protein belongs to the complex I subunit 5 family. As to quaternary structure, core subunit of respiratory chain NADH dehydrogenase (Complex I) which is composed of 45 different subunits.

Its subcellular location is the mitochondrion inner membrane. The enzyme catalyses a ubiquinone + NADH + 5 H(+)(in) = a ubiquinol + NAD(+) + 4 H(+)(out). In terms of biological role, core subunit of the mitochondrial membrane respiratory chain NADH dehydrogenase (Complex I) which catalyzes electron transfer from NADH through the respiratory chain, using ubiquinone as an electron acceptor. Essential for the catalytic activity and assembly of complex I. The protein is NADH-ubiquinone oxidoreductase chain 5 (MT-ND5) of Macaca fascicularis (Crab-eating macaque).